We begin with the raw amino-acid sequence, 100 residues long: Urease subunit gamma (100 aa).

This sequence belongs to the urease gamma subunit family. Heterotrimer of UreA (gamma), UreB (beta) and UreC (alpha) subunits. Three heterotrimers associate to form the active enzyme.

The protein localises to the cytoplasm. The catalysed reaction is urea + 2 H2O + H(+) = hydrogencarbonate + 2 NH4(+). It functions in the pathway nitrogen metabolism; urea degradation; CO(2) and NH(3) from urea (urease route): step 1/1. This Acinetobacter baumannii (strain AB307-0294) protein is Urease subunit gamma.